The following is a 320-amino-acid chain: Pantothenate kinase (320 aa).

Residue 96 to 103 coordinates ATP; sequence GSVAVGKS.

The protein belongs to the prokaryotic pantothenate kinase family.

It is found in the cytoplasm. The enzyme catalyses (R)-pantothenate + ATP = (R)-4'-phosphopantothenate + ADP + H(+). Its pathway is cofactor biosynthesis; coenzyme A biosynthesis; CoA from (R)-pantothenate: step 1/5. This chain is Pantothenate kinase, found in Brevibacillus brevis (strain 47 / JCM 6285 / NBRC 100599).